The chain runs to 320 residues: o-succinylbenzoate synthase (320 aa).

Catalysis depends on lysine 133, which acts as the Proton donor. Residues aspartate 161, glutamate 190, and aspartate 213 each contribute to the Mg(2+) site. The Proton acceptor role is filled by lysine 235.

This sequence belongs to the mandelate racemase/muconate lactonizing enzyme family. MenC type 1 subfamily. A divalent metal cation is required as a cofactor.

The catalysed reaction is (1R,6R)-6-hydroxy-2-succinyl-cyclohexa-2,4-diene-1-carboxylate = 2-succinylbenzoate + H2O. Its pathway is quinol/quinone metabolism; 1,4-dihydroxy-2-naphthoate biosynthesis; 1,4-dihydroxy-2-naphthoate from chorismate: step 4/7. It functions in the pathway quinol/quinone metabolism; menaquinone biosynthesis. In terms of biological role, converts 2-succinyl-6-hydroxy-2,4-cyclohexadiene-1-carboxylate (SHCHC) to 2-succinylbenzoate (OSB). The sequence is that of o-succinylbenzoate synthase from Escherichia coli O81 (strain ED1a).